Reading from the N-terminus, the 312-residue chain is Ribosomal RNA small subunit methyltransferase H (312 aa).

S-adenosyl-L-methionine is bound by residues glycine 35 to histidine 37, aspartate 55, phenylalanine 79, aspartate 101, and glutamine 108.

This sequence belongs to the methyltransferase superfamily. RsmH family.

Its subcellular location is the cytoplasm. It catalyses the reaction cytidine(1402) in 16S rRNA + S-adenosyl-L-methionine = N(4)-methylcytidine(1402) in 16S rRNA + S-adenosyl-L-homocysteine + H(+). Functionally, specifically methylates the N4 position of cytidine in position 1402 (C1402) of 16S rRNA. This chain is Ribosomal RNA small subunit methyltransferase H, found in Glaesserella parasuis serovar 5 (strain SH0165) (Haemophilus parasuis).